A 178-amino-acid polypeptide reads, in one-letter code: Killin (178 aa).

Residues 8 to 50 mediate DNA binding; that stretch reads SARPGRTVHVWGYRVEWKVRNGRKLQPSEWAGRGDLGGFKRRW.

It is found in the nucleus. DNA-binding protein involved in S phase checkpoint control-coupled apoptosis by mediating p53/TP53-induced apoptosis. Has the ability to inhibit DNA synthesis and S phase arrest coupled to apoptosis. Has affinity to both double- and single-stranded DNA. The chain is Killin (KLLN) from Homo sapiens (Human).